The following is a 176-amino-acid chain: Ferritin, spleen middle subunit (176 aa).

The 150-residue stretch at 7–156 (QNYHRDCEAA…DFITNLSRMD (150 aa)) folds into the Ferritin-like diiron domain. Positions 24, 59, 62, 104, and 138 each coordinate Fe cation.

The protein belongs to the ferritin family. In spleen, forms a homomer. The functional molecule forms a roughly spherical shell with a diameter of 12 nm and contains a central cavity into which the insoluble mineral iron core is deposited. As to expression, spleen (at protein level).

The catalysed reaction is 4 Fe(2+) + O2 + 4 H(+) = 4 Fe(3+) + 2 H2O. In terms of biological role, stores iron in a soluble, non-toxic, readily available form. Important for iron homeostasis. Has ferroxidase activity. Iron is taken up in the ferrous form and deposited as ferric hydroxides after oxidation. The chain is Ferritin, spleen middle subunit from Trematomus bernacchii (Emerald rockcod).